Consider the following 216-residue polypeptide: Probable GTP-binding protein EngB (216 aa).

One can recognise an EngB-type G domain in the interval 30 to 204 (DGLEVAFAGR…HDVLARWLGL (175 aa)). GTP is bound by residues 38-45 (GRSNAGKS), 64-68 (GRTQL), 82-85 (DLPG), 149-152 (TKAD), and 182-185 (LFSA). Residues S45 and T66 each coordinate Mg(2+).

This sequence belongs to the TRAFAC class TrmE-Era-EngA-EngB-Septin-like GTPase superfamily. EngB GTPase family. It depends on Mg(2+) as a cofactor.

Its function is as follows. Necessary for normal cell division and for the maintenance of normal septation. This is Probable GTP-binding protein EngB from Azotobacter vinelandii (strain DJ / ATCC BAA-1303).